The sequence spans 514 residues: Triacylglyceride transporter MAB_2807 (514 aa).

The next 11 helical transmembrane spans lie at 19-39, 58-78, 88-108, 118-138, 157-177, 178-198, 210-230, 239-259, 278-298, 316-336, and 344-364; these read IAIG…YVVV, QVTP…PLLG, LILQ…ALST, VIQG…GADL, LGSV…GSWT, AIFW…QFSV, VDVV…VGLY, LPEW…AFIL, PFFA…VTLV, VFLL…GGWL, and IIAV…SGWP. A beta-hairpin region spans residues 371 to 380; that stretch reads VHNFGFFTLP. The next 3 membrane-spanning stretches (helical) occupy residues 385-405, 420-440, and 485-505; these read DLVV…SAAL, VVVA…GWGI, and MFAI…FVGS.

Belongs to the major facilitator superfamily. P55 (TC 2.A.1.3.34) family.

The protein localises to the cell inner membrane. In terms of biological role, in association with lipoprotein LprG probably transports triacyglycerides (TAG) across the inner cell membrane into the periplasm; TAG probably regulates lipid metabolism and growth regulation and plays a structural role in the outer membrane. TAG (and maybe other lipids) enters the central cavity of the P55 transporter from within the cell inner membrane via clefts on the cytoplasmic face of P55 between TM5-TM8 and TM2-TM11. From there the lipid is probably transferred to the hydrophobic cavity of LprG. Involved in drug susceptibilty, its expression partially complements the antibiotic susceptibilty of a double lprG-mfs deletion. Probably does not function as a bona fide drug efflux pump, but instead plays a role in outer membrane biogenesis. Probably required with LprG for normal surface localization of lipoarabinomannan (LAM). The chain is Triacylglyceride transporter MAB_2807 from Mycobacteroides abscessus (strain ATCC 19977 / DSM 44196 / CCUG 20993 / CIP 104536 / JCM 13569 / NCTC 13031 / TMC 1543 / L948) (Mycobacterium abscessus).